Consider the following 287-residue polypeptide: Eukaryotic translation initiation factor 3 subunit F (287 aa).

In terms of domain architecture, MPN spans 12 to 142 (VRVHPVVLFQ…IKAYVCVSLG (131 aa)).

The protein belongs to the eIF-3 subunit F family. Component of the eukaryotic translation initiation factor 3 (eIF-3) complex.

The protein resides in the cytoplasm. Its function is as follows. Component of the eukaryotic translation initiation factor 3 (eIF-3) complex, which is involved in protein synthesis of a specialized repertoire of mRNAs and, together with other initiation factors, stimulates binding of mRNA and methionyl-tRNAi to the 40S ribosome. The eIF-3 complex specifically targets and initiates translation of a subset of mRNAs involved in cell proliferation. This chain is Eukaryotic translation initiation factor 3 subunit F, found in Anopheles gambiae (African malaria mosquito).